The primary structure comprises 605 residues: Zinc metalloproteinase nas-34 (605 aa).

Residues 1–19 form the signal peptide; it reads MVSYWPVLIVLCLLPICHA. Residues 20 to 124 constitute a propeptide that is removed on maturation; that stretch reads KSYFADFVNG…EFLYAIRGKR (105 aa). The Peptidase M12A domain maps to 124–322; it reads RSMTSFLSER…VKRINFAYCN (199 aa). 2 cysteine pairs are disulfide-bonded: cysteine 165–cysteine 321 and cysteine 191–cysteine 211. Residue histidine 219 coordinates Zn(2+). The active site involves glutamate 220. Residues histidine 223 and histidine 229 each coordinate Zn(2+). The 41-residue stretch at 317 to 357 folds into the EGF-like domain; it reads NFAYCNSTCSNYLDCQNGGYINPNDCNNCKCPPGFGGQLCD. Asparagine 322 carries N-linked (GlcNAc...) asparagine glycosylation. Cystine bridges form between cysteine 325/cysteine 345, cysteine 347/cysteine 356, cysteine 366/cysteine 388, and cysteine 415/cysteine 436. In terms of domain architecture, CUB spans 366-469; that stretch reads CGAGDITATS…ARFSLNYRYD (104 aa). A disordered region spans residues 479 to 526; sequence TTTSTTTTTAPITVPTVSPTTTTTRQTTTTARTSTTTTTTQAPPTTTT. One can recognise a TSP type-1 domain in the interval 525 to 566; that stretch reads TTSTSQCASWSACSAQCGGCGTQSRRCGTYVETVYCNTNPCT. Disulfide bonds link cysteine 531-cysteine 551, cysteine 537-cysteine 560, and cysteine 541-cysteine 565.

Requires Zn(2+) as cofactor. Expressed in hypodermal cells. First expressed in the dorsal and lateral surface area of the middle and posterior region of embryos. At later stages, it localizes to lateral surface regions, probably corresponding to hypodermal seam cells. In L1 larvae, it is expressed in seam cells and in a few cells anterior to the nerve ring.

The protein localises to the secreted. In terms of biological role, metalloprotease. Required for normal hatching and migration of neuroblasts. May act by degrading eggshell proteins at hatching. In Caenorhabditis elegans, this protein is Zinc metalloproteinase nas-34 (hch-1).